We begin with the raw amino-acid sequence, 289 residues long: Bis(5'-nucleosyl)-tetraphosphatase, symmetrical (289 aa).

Belongs to the Ap4A hydrolase family.

It catalyses the reaction P(1),P(4)-bis(5'-adenosyl) tetraphosphate + H2O = 2 ADP + 2 H(+). Functionally, hydrolyzes diadenosine 5',5'''-P1,P4-tetraphosphate to yield ADP. The polypeptide is Bis(5'-nucleosyl)-tetraphosphatase, symmetrical (Yersinia pseudotuberculosis serotype IB (strain PB1/+)).